A 193-amino-acid chain; its full sequence is Rho-related GTP-binding protein RhoA-C (193 aa).

GTP contacts are provided by residues 12 to 19, 30 to 37, 59 to 63, 117 to 120, and 160 to 162; these read GDGACGKT, FPEVYVPT, DTAGQ, NKKD, and SAK. (Microbial infection) O-linked (GlcNAc) tyrosine; by Yersinia Afp18 glycosylation occurs at tyrosine 34. At cysteine 190 the chain carries Cysteine methyl ester. Residue cysteine 190 is the site of S-geranylgeranyl cysteine attachment. Positions 191–193 are cleaved as a propeptide — removed in mature form; it reads LLL.

Belongs to the small GTPase superfamily. Rho family. In terms of processing, (Microbial infection) Glycosylated at Tyr-34 by Yersinia ruckeri toxin Afp18. Mono-O-GlcNAcylation by Afp18 inhibits RhoA activation by guanine nucleotide exchange factors and blocks RhoA signaling.

The protein localises to the cell membrane. Regulates a signal transduction pathway linking plasma membrane receptors to the assembly of focal adhesions and actin stress fibers. This Danio rerio (Zebrafish) protein is Rho-related GTP-binding protein RhoA-C.